We begin with the raw amino-acid sequence, 446 residues long: GTPase Der (446 aa).

EngA-type G domains are found at residues proline 3–glutamate 167 and isoleucine 180–threonine 353. Residues glycine 9–serine 16, aspartate 56–phenylalanine 60, asparagine 119–glutamate 122, glycine 186–serine 193, aspartate 233–leucine 237, and asparagine 298–aspartate 301 contribute to the GTP site. Residues lysine 354–arginine 438 enclose the KH-like domain.

The protein belongs to the TRAFAC class TrmE-Era-EngA-EngB-Septin-like GTPase superfamily. EngA (Der) GTPase family. Associates with the 50S ribosomal subunit.

Functionally, GTPase that plays an essential role in the late steps of ribosome biogenesis. The polypeptide is GTPase Der (Methylibium petroleiphilum (strain ATCC BAA-1232 / LMG 22953 / PM1)).